We begin with the raw amino-acid sequence, 498 residues long: L-ornithine N(5)-monooxygenase (498 aa).

FAD-binding positions include 80–88 and Gln-99; that span reads ERQKQFAWH. Lys-104 is a substrate binding site. Val-165 contributes to the FAD binding site. Residues 251–254 and Arg-276 each bind NADP(+); that span reads SGQS. Substrate is bound by residues 290-293 and Asn-320; that span reads NEVF. NADP(+) is bound at residue 320–322; sequence NYS. 463 to 465 is an FAD binding site; that stretch reads SLL. Residue Ser-466 coordinates substrate.

The protein belongs to the lysine N(6)-hydroxylase/L-ornithine N(5)-oxygenase family. Homotetramer. FAD is required as a cofactor.

The enzyme catalyses L-ornithine + NADPH + O2 = N(5)-hydroxy-L-ornithine + NADP(+) + H2O. The catalysed reaction is L-ornithine + NADH + O2 = N(5)-hydroxy-L-ornithine + NAD(+) + H2O. It participates in siderophore biosynthesis. In terms of biological role, catalyzes the conversion of L-ornithine to N(5)-hydroxyornithine, the first step in the biosynthesis of all hydroxamate-containing siderophores, such as the secreted triacetylfusarinine C (TAFC) involved in iron uptake and the intracellular iron storage compound desferriferricrocin (DFFC). This is L-ornithine N(5)-monooxygenase from Emericella nidulans (strain FGSC A4 / ATCC 38163 / CBS 112.46 / NRRL 194 / M139) (Aspergillus nidulans).